Reading from the N-terminus, the 91-residue chain is Small ribosomal subunit protein uS17 (91 aa).

The protein belongs to the universal ribosomal protein uS17 family. In terms of assembly, part of the 30S ribosomal subunit.

In terms of biological role, one of the primary rRNA binding proteins, it binds specifically to the 5'-end of 16S ribosomal RNA. The polypeptide is Small ribosomal subunit protein uS17 (Thermobifida fusca (strain YX)).